A 244-amino-acid chain; its full sequence is DNA repair protein RecO (244 aa).

This sequence belongs to the RecO family.

Involved in DNA repair and RecF pathway recombination. This Myxococcus xanthus (strain DK1622) protein is DNA repair protein RecO.